Reading from the N-terminus, the 278-residue chain is Biotin synthase (278 aa).

The Radical SAM core domain maps to 1-227 (MQIMLCAISN…QSVVMVAGGR (227 aa)). [4Fe-4S] cluster contacts are provided by Cys16, Cys20, and Cys23. Positions 60, 95, and 153 each coordinate [2Fe-2S] cluster.

It belongs to the radical SAM superfamily. Biotin synthase family. In terms of assembly, homodimer. The cofactor is [4Fe-4S] cluster. Requires [2Fe-2S] cluster as cofactor.

It catalyses the reaction (4R,5S)-dethiobiotin + (sulfur carrier)-SH + 2 reduced [2Fe-2S]-[ferredoxin] + 2 S-adenosyl-L-methionine = (sulfur carrier)-H + biotin + 2 5'-deoxyadenosine + 2 L-methionine + 2 oxidized [2Fe-2S]-[ferredoxin]. Its pathway is cofactor biosynthesis; biotin biosynthesis; biotin from 7,8-diaminononanoate: step 2/2. Catalyzes the conversion of dethiobiotin (DTB) to biotin by the insertion of a sulfur atom into dethiobiotin via a radical-based mechanism. The polypeptide is Biotin synthase (Campylobacter jejuni subsp. jejuni serotype O:23/36 (strain 81-176)).